Reading from the N-terminus, the 66-residue chain is Phylloseptin-S2 (66 aa).

Residues 1 to 22 (MAFLKKSLFLVLFLGLVSLSIC) form the signal peptide. The propeptide occupies 23 to 46 (EEEKRETEEEEHDQEEDDKSEEKR). The disordered stretch occupies residues 25–44 (EKRETEEEEHDQEEDDKSEE). A compositionally biased stretch (acidic residues) spans 30–41 (EEEEHDQEEDDK). F65 is modified (phenylalanine amide).

In terms of tissue distribution, expressed by the skin glands.

It is found in the secreted. The protein resides in the target cell membrane. Its function is as follows. Antimicrobial peptide with high activity against Gram-positive bacteria, moderate activity against Gram-negative bacteria, and moderate activity against fungi. Acts by causing bacterial membrane disruption inducing leakage of the intracellular content followed by cell death. It adopts an alpha-helical amphipathic structure in membrane environments. Also shows highly potent antiparasitic activity against Leishmania species. Shows moderate hemolytic activity on human erythrocytes (LC(50)=25 uM). Is also active on human monocytes (IC(50)=22.5 uM). This chain is Phylloseptin-S2, found in Phyllomedusa sauvagei (Sauvage's leaf frog).